The following is a 283-amino-acid chain: Phosphatidylglycerol--prolipoprotein diacylglyceryl transferase (283 aa).

7 helical membrane-spanning segments follow: residues L18–G38, L59–Y79, I91–A111, I124–L144, T185–W205, Y213–E233, and G251–I271. R143 serves as a coordination point for a 1,2-diacyl-sn-glycero-3-phospho-(1'-sn-glycerol).

The protein belongs to the Lgt family.

The protein resides in the cell inner membrane. It carries out the reaction L-cysteinyl-[prolipoprotein] + a 1,2-diacyl-sn-glycero-3-phospho-(1'-sn-glycerol) = an S-1,2-diacyl-sn-glyceryl-L-cysteinyl-[prolipoprotein] + sn-glycerol 1-phosphate + H(+). Its pathway is protein modification; lipoprotein biosynthesis (diacylglyceryl transfer). Its function is as follows. Catalyzes the transfer of the diacylglyceryl group from phosphatidylglycerol to the sulfhydryl group of the N-terminal cysteine of a prolipoprotein, the first step in the formation of mature lipoproteins. This chain is Phosphatidylglycerol--prolipoprotein diacylglyceryl transferase, found in Porphyromonas gingivalis (strain ATCC 33277 / DSM 20709 / CIP 103683 / JCM 12257 / NCTC 11834 / 2561).